Consider the following 135-residue polypeptide: Large ribosomal subunit protein uL16c (135 aa).

It belongs to the universal ribosomal protein uL16 family. As to quaternary structure, part of the 50S ribosomal subunit.

It is found in the plastid. Its subcellular location is the chloroplast. The polypeptide is Large ribosomal subunit protein uL16c (Platanus occidentalis (Sycamore)).